Reading from the N-terminus, the 270-residue chain is Ribosomal RNA-processing protein 7 homolog (270 aa).

Residues 233–268 (TFQIKKNRQEKAQELLKKFEEDRKRITQLKQARNFK) adopt a coiled-coil conformation.

The protein belongs to the RRP7 family.

The polypeptide is Ribosomal RNA-processing protein 7 homolog (Caenorhabditis elegans).